The primary structure comprises 743 residues: Phosphoribosylformylglycinamidine synthase subunit PurL (743 aa).

His50 is an active-site residue. Residues Tyr53 and Lys92 each contribute to the ATP site. Position 94 (Glu94) interacts with Mg(2+). Substrate is bound by residues 95–98 and Arg117; that span reads SHNH. The active-site Proton acceptor is the His96. Asp118 provides a ligand contact to Mg(2+). Gln241 contacts substrate. Asp269 is a binding site for Mg(2+). 313–315 contacts substrate; it reads ESQ. Residues Asp495 and Gly532 each contribute to the ATP site. Asn533 lines the Mg(2+) pocket. Ser535 is a binding site for substrate.

It belongs to the FGAMS family. Monomer. Part of the FGAM synthase complex composed of 1 PurL, 1 PurQ and 2 PurS subunits.

The protein resides in the cytoplasm. It carries out the reaction N(2)-formyl-N(1)-(5-phospho-beta-D-ribosyl)glycinamide + L-glutamine + ATP + H2O = 2-formamido-N(1)-(5-O-phospho-beta-D-ribosyl)acetamidine + L-glutamate + ADP + phosphate + H(+). Its pathway is purine metabolism; IMP biosynthesis via de novo pathway; 5-amino-1-(5-phospho-D-ribosyl)imidazole from N(2)-formyl-N(1)-(5-phospho-D-ribosyl)glycinamide: step 1/2. In terms of biological role, part of the phosphoribosylformylglycinamidine synthase complex involved in the purines biosynthetic pathway. Catalyzes the ATP-dependent conversion of formylglycinamide ribonucleotide (FGAR) and glutamine to yield formylglycinamidine ribonucleotide (FGAM) and glutamate. The FGAM synthase complex is composed of three subunits. PurQ produces an ammonia molecule by converting glutamine to glutamate. PurL transfers the ammonia molecule to FGAR to form FGAM in an ATP-dependent manner. PurS interacts with PurQ and PurL and is thought to assist in the transfer of the ammonia molecule from PurQ to PurL. The chain is Phosphoribosylformylglycinamidine synthase subunit PurL from Rhizobium etli (strain CIAT 652).